A 247-amino-acid polypeptide reads, in one-letter code: NAD(P)H-quinone oxidoreductase subunit K (247 aa).

[4Fe-4S] cluster contacts are provided by Cys-63, Cys-64, Cys-128, and Cys-159.

This sequence belongs to the complex I 20 kDa subunit family. NDH-1 can be composed of about 15 different subunits; different subcomplexes with different compositions have been identified which probably have different functions. [4Fe-4S] cluster serves as cofactor.

The protein resides in the cellular thylakoid membrane. The enzyme catalyses a plastoquinone + NADH + (n+1) H(+)(in) = a plastoquinol + NAD(+) + n H(+)(out). It catalyses the reaction a plastoquinone + NADPH + (n+1) H(+)(in) = a plastoquinol + NADP(+) + n H(+)(out). Its function is as follows. NDH-1 shuttles electrons from an unknown electron donor, via FMN and iron-sulfur (Fe-S) centers, to quinones in the respiratory and/or the photosynthetic chain. The immediate electron acceptor for the enzyme in this species is believed to be plastoquinone. Couples the redox reaction to proton translocation, and thus conserves the redox energy in a proton gradient. Cyanobacterial NDH-1 also plays a role in inorganic carbon-concentration. The chain is NAD(P)H-quinone oxidoreductase subunit K from Gloeothece citriformis (strain PCC 7424) (Cyanothece sp. (strain PCC 7424)).